A 410-amino-acid chain; its full sequence is Protein translocase subunit SecY 2 (410 aa).

10 consecutive transmembrane segments (helical) span residues Ile-2–Leu-22, Phe-45–Leu-65, Leu-94–Thr-114, Phe-125–Gly-145, Leu-147–Val-167, Trp-188–Phe-208, Val-241–Phe-261, Gly-284–Ile-304, Tyr-339–Ala-359, and Leu-366–Gly-386.

Belongs to the SecY/SEC61-alpha family. Component of the Sec protein translocase complex. Heterotrimer consisting of SecY, SecE and SecG subunits. The heterotrimers can form oligomers, although 1 heterotrimer is thought to be able to translocate proteins. Interacts with the ribosome. Interacts with SecDF, and other proteins may be involved. Interacts with SecA.

Its subcellular location is the cell membrane. In terms of biological role, the central subunit of the protein translocation channel SecYEG. Consists of two halves formed by TMs 1-5 and 6-10. These two domains form a lateral gate at the front which open onto the bilayer between TMs 2 and 7, and are clamped together by SecE at the back. The channel is closed by both a pore ring composed of hydrophobic SecY resides and a short helix (helix 2A) on the extracellular side of the membrane which forms a plug. The plug probably moves laterally to allow the channel to open. The ring and the pore may move independently. This chain is Protein translocase subunit SecY 2, found in Lactobacillus kefiranofaciens subsp. kefiranofaciens.